We begin with the raw amino-acid sequence, 661 residues long: MTQAQAKRFQFDRQLWHRFVETAQPYFYPVGQKQTRVFLGLILALMVVVVALTLFLSMGLTLWATAIFPDFFAKSGEGLVDGVQGLINSPAPWIGLVALAMAGAVFISQRQKLQQRWLQWLLLGVLLSLLFVVNGLNVILSFVFRFIDTALNGKDAEVFWQFLWIYGIVIVVAIPIIVAYRYLRQKLGVLWRQWLTEHFLGRYFKGRSYYHLDSNSAYTLIDNPDQRITQDIQSFTGVTLDFLLDILDSILTLISFTAILYTISQTLMWGLIGYAVFGTVVAIAIGTRLIRINYEQLRLEANFRYGLVRVRDNAESIAFYRGEGLERKQVTDRLLGAIRNFNLLIIWQALISLFQLGYNYFTRLIPYIIIAPLYLAGDLDFGAIAQASLAFGMVLSALSLVTNQIQNITEFAASINRLGEFYESLNGPSNELERPESTGFDHNVITTRIGATVALENVTLSPPNSSRILVRDLSLAVAPGNHLLIMGPSGSGKSSLLRAIAGLWDSGQGTIERPELADLLFLPQRPYMILGTLREQLIYPSAQSIADDDFLLETLNKVNLPDLAERFGGLDSLENWSSVLSLGEQQRIALARVFINQPRYAILDEATSALDVNNEAELYHALTDLGTTFISVGHRPTLRNFHRQCLEVQAEGRWQISPINN.

A run of 7 helical transmembrane segments spans residues 37 to 57, 87 to 107, 120 to 140, 158 to 178, 243 to 263, 266 to 286, and 341 to 361; these read VFLGLILALMVVVVALTLFLS, INSPAPWIGLVALAMAGAVFI, WLLLGVLLSLLFVVNGLNVIL, VFWQFLWIYGIVIVVAIPIIV, LLDILDSILTLISFTAILYTI, TLMWGLIGYAVFGTVVAIAIG, and FNLLIIWQALISLFQLGYNYF. The ABC transmembrane type-1 domain maps to 123 to 410; it reads LGVLLSLLFV…VTNQIQNITE (288 aa). Residues 453–659 enclose the ABC transporter domain; the sequence is VALENVTLSP…AEGRWQISPI (207 aa). 487-494 provides a ligand contact to ATP; the sequence is GPSGSGKS.

The protein belongs to the ABC transporter superfamily.

Its subcellular location is the cell inner membrane. This is an uncharacterized protein from Synechocystis sp. (strain ATCC 27184 / PCC 6803 / Kazusa).